Consider the following 353-residue polypeptide: MMVTSSSIPIGQILYHDPFFFVKREIFYFFLIFLLSFILLRIPMSFWEKNSNLILIISIFLLTIVLLIGKSVHGSYRWINIGILHIQPAEICKISSFFYISNYLSRKTNEVRNNFWGFLKPITIIIIQSVLLLAEPDLGTVIVLFLTTLSVLFLSGVKIKQFFIIIFFVTLIITALVLFEPYRIKRILSFWNPWKDPFGNGYQLTQSLIALGRGHFFGQGLGNSIQKLNYLPEAHSDFIFSIIGEELGYIGCFLILLMIFFISFRAMYIGQQSFEKKQVFSGFLACSIGLWFSFQTLINIGAVTGILPTKGLTLPLISYGGSSLIVNLMAICILLRIDFEIRLSEHQAFPKGI.

The next 8 helical transmembrane spans lie at 26–46 (IFYF…PMSF), 53–73 (LILI…KSVH), 115–135 (FWGF…LLAE), 137–157 (DLGT…LSGV), 162–182 (FFII…FEPY), 242–262 (IIGE…IFFI), 288–308 (IGLW…GILP), and 314–334 (LPLI…ICIL).

It belongs to the SEDS family. FtsW subfamily.

It is found in the cell inner membrane. The catalysed reaction is [GlcNAc-(1-&gt;4)-Mur2Ac(oyl-L-Ala-gamma-D-Glu-L-Lys-D-Ala-D-Ala)](n)-di-trans,octa-cis-undecaprenyl diphosphate + beta-D-GlcNAc-(1-&gt;4)-Mur2Ac(oyl-L-Ala-gamma-D-Glu-L-Lys-D-Ala-D-Ala)-di-trans,octa-cis-undecaprenyl diphosphate = [GlcNAc-(1-&gt;4)-Mur2Ac(oyl-L-Ala-gamma-D-Glu-L-Lys-D-Ala-D-Ala)](n+1)-di-trans,octa-cis-undecaprenyl diphosphate + di-trans,octa-cis-undecaprenyl diphosphate + H(+). Its pathway is cell wall biogenesis; peptidoglycan biosynthesis. Its function is as follows. Peptidoglycan polymerase that is essential for cell division. The protein is Probable peptidoglycan glycosyltransferase FtsW of Buchnera aphidicola subsp. Schizaphis graminum (strain Sg).